A 273-amino-acid polypeptide reads, in one-letter code: Ribosomal RNA small subunit methyltransferase A (273 aa).

S-adenosyl-L-methionine-binding residues include N18, L20, G45, E66, D91, and N113.

This sequence belongs to the class I-like SAM-binding methyltransferase superfamily. rRNA adenine N(6)-methyltransferase family. RsmA subfamily.

The protein localises to the cytoplasm. It catalyses the reaction adenosine(1518)/adenosine(1519) in 16S rRNA + 4 S-adenosyl-L-methionine = N(6)-dimethyladenosine(1518)/N(6)-dimethyladenosine(1519) in 16S rRNA + 4 S-adenosyl-L-homocysteine + 4 H(+). Specifically dimethylates two adjacent adenosines (A1518 and A1519) in the loop of a conserved hairpin near the 3'-end of 16S rRNA in the 30S particle. May play a critical role in biogenesis of 30S subunits. This is Ribosomal RNA small subunit methyltransferase A from Salmonella schwarzengrund (strain CVM19633).